A 244-amino-acid polypeptide reads, in one-letter code: Large ribosomal subunit protein uL30 (244 aa).

The protein belongs to the universal ribosomal protein uL30 family.

The protein is Large ribosomal subunit protein uL30 (RPL7) of Candida glabrata (strain ATCC 2001 / BCRC 20586 / JCM 3761 / NBRC 0622 / NRRL Y-65 / CBS 138) (Yeast).